Here is a 396-residue protein sequence, read N- to C-terminus: MYKVILIRYGEIALKGQNRHVFINKLIENIKESLKGVGEYKLKKTLGRIYVFPNDNINQFIEKLKMVPGIVSLSPTAVCPLDFDSLKETSVKVLKDAINDYPATFKVETRRANKQFPYKSPEVSREIGAHLLRSINTPDHNILTVDVHNPRYTLKIEIRKKNIYVFTRSISGPGGLPVGSSGKGLLLLSGGIDSPVAGWLAMKRGIELEALYFHSFPYTSDRAKEKVIDLTKVLSRYCKKIKLYVGYFTDIQRAIQENCPQKYYITIMRRMMYRMAERIARKNGDLVLITGESVGQVASQTLESMNVINEVTNMPVLRPLATMNKTEIMDLAREIGTYDISILPHEDCCTIFVPRHPVTRPRLDRTLKAEEKLKAEIDGLLEDAIEKTEILEIKHG.

In terms of domain architecture, THUMP spans Asn58–Ser169. ATP-binding positions include Leu187–Leu188, Tyr212–Phe213, Arg269, Gly291, and Gln300.

It belongs to the ThiI family.

The protein resides in the cytoplasm. It catalyses the reaction [ThiI sulfur-carrier protein]-S-sulfanyl-L-cysteine + a uridine in tRNA + 2 reduced [2Fe-2S]-[ferredoxin] + ATP + H(+) = [ThiI sulfur-carrier protein]-L-cysteine + a 4-thiouridine in tRNA + 2 oxidized [2Fe-2S]-[ferredoxin] + AMP + diphosphate. The catalysed reaction is [ThiS sulfur-carrier protein]-C-terminal Gly-Gly-AMP + S-sulfanyl-L-cysteinyl-[cysteine desulfurase] + AH2 = [ThiS sulfur-carrier protein]-C-terminal-Gly-aminoethanethioate + L-cysteinyl-[cysteine desulfurase] + A + AMP + 2 H(+). Its pathway is cofactor biosynthesis; thiamine diphosphate biosynthesis. In terms of biological role, catalyzes the ATP-dependent transfer of a sulfur to tRNA to produce 4-thiouridine in position 8 of tRNAs, which functions as a near-UV photosensor. Also catalyzes the transfer of sulfur to the sulfur carrier protein ThiS, forming ThiS-thiocarboxylate. This is a step in the synthesis of thiazole, in the thiamine biosynthesis pathway. The sulfur is donated as persulfide by IscS. The chain is Probable tRNA sulfurtransferase from Halothermothrix orenii (strain H 168 / OCM 544 / DSM 9562).